The following is a 101-amino-acid chain: MKLSVYIILSILFISTVFYEIQFTEARQLRKTDDQDHDDHHFTVGYTDDFGPTSPGNSPGIGHKMKENEENAGGYKDDFEPTTPGHSPGVGHAVKNNEPNA.

The first 26 residues, 1-26 (MKLSVYIILSILFISTVFYEIQFTEA), serve as a signal peptide directing secretion. Positions 27–48 (RQLRKTDDQDHDDHHFTVGYTD) are excised as a propeptide. Residues 29–42 (LRKTDDQDHDDHHF) are compositionally biased toward basic and acidic residues. The tract at residues 29 to 101 (LRKTDDQDHD…HAVKNNEPNA (73 aa)) is disordered. Residues Pro52, Pro55, and Pro59 each carry the hydroxyproline modification. A propeptide spanning residues 64–77 (KMKENEENAGGYKD) is cleaved from the precursor. A compositionally biased stretch (basic and acidic residues) spans 64 to 79 (KMKENEENAGGYKDDF). 3 positions are modified to hydroxyproline: Pro81, Pro84, and Pro88. A propeptide spanning residues 93–101 (AVKNNEPNA) is cleaved from the precursor.

It belongs to the C-terminally encoded plant signaling peptide (CEP) family. As to quaternary structure, interacts with CEP receptors (e.g. CEPR1 and CEPR2). The mature small signaling peptide is generated by proteolytic processing of the longer precursor. As to expression, expressed in lateral root primordia and in lateral roots excluding the meristem region. Also present in the aerial tissues, such as leaf petioles and the shoot apex region.

It localises to the secreted. The protein resides in the extracellular space. Its subcellular location is the apoplast. In terms of biological role, extracellular signaling peptide that represses primary root growth rate. Modulates leaf morphology. Regulates systemic nitrogen (N)-demand signaling. Mediates up-regulation of genes involved in N uptake and assimilation pathways. In Arabidopsis thaliana (Mouse-ear cress), this protein is Precursor of CEP6.